We begin with the raw amino-acid sequence, 251 residues long: ATP synthase subunit a (251 aa).

Transmembrane regions (helical) follow at residues 34–54, 93–113, 130–150, 195–215, and 216–236; these read VFLT…AASS, FVGT…LVPF, INTT…AGFS, LVVG…VMAL, and GLFT…AYIG.

The protein belongs to the ATPase A chain family. In terms of assembly, F-type ATPases have 2 components, CF(1) - the catalytic core - and CF(0) - the membrane proton channel. CF(1) has five subunits: alpha(3), beta(3), gamma(1), delta(1), epsilon(1). CF(0) has four main subunits: a, b, b' and c.

Its subcellular location is the cellular thylakoid membrane. Its function is as follows. Key component of the proton channel; it plays a direct role in the translocation of protons across the membrane. This is ATP synthase subunit a from Trichormus variabilis (strain ATCC 29413 / PCC 7937) (Anabaena variabilis).